Consider the following 132-residue polypeptide: Large ribosomal subunit protein bL12 (132 aa).

It belongs to the bacterial ribosomal protein bL12 family. As to quaternary structure, homodimer. Part of the ribosomal stalk of the 50S ribosomal subunit. Forms a multimeric L10(L12)X complex, where L10 forms an elongated spine to which 2 to 4 L12 dimers bind in a sequential fashion. Binds GTP-bound translation factors.

Forms part of the ribosomal stalk which helps the ribosome interact with GTP-bound translation factors. Is thus essential for accurate translation. The sequence is that of Large ribosomal subunit protein bL12 from Chloroflexus aurantiacus (strain ATCC 29366 / DSM 635 / J-10-fl).